The following is a 108-amino-acid chain: MRQTILKLYEKANERDWKPWELQSEMRKIYENVVAVGDDLSFTVRLDKDVKPVSLEKFGASKVKLHPFKTAWRFERGFIAFEGKFLRISREIDKKLLEEILSVILPED.

This is an uncharacterized protein from Archaeoglobus fulgidus (strain ATCC 49558 / DSM 4304 / JCM 9628 / NBRC 100126 / VC-16).